The sequence spans 94 residues: Small ribosomal subunit protein bS18 (94 aa).

Belongs to the bacterial ribosomal protein bS18 family. As to quaternary structure, part of the 30S ribosomal subunit. Forms a tight heterodimer with protein bS6.

In terms of biological role, binds as a heterodimer with protein bS6 to the central domain of the 16S rRNA, where it helps stabilize the platform of the 30S subunit. The chain is Small ribosomal subunit protein bS18 from Acetivibrio thermocellus (strain ATCC 27405 / DSM 1237 / JCM 9322 / NBRC 103400 / NCIMB 10682 / NRRL B-4536 / VPI 7372) (Clostridium thermocellum).